Consider the following 446-residue polypeptide: tRNA modification GTPase MnmE (446 aa).

Residues arginine 24, glutamate 81, and lysine 120 each coordinate (6S)-5-formyl-5,6,7,8-tetrahydrofolate. The region spanning 216–368 (GLHAVLIGPP…LHIRLRELAL (153 aa)) is the TrmE-type G domain. Residue asparagine 226 participates in K(+) binding. Residues 226–231 (NAGKSS), 245–251 (TDVAGTT), and 270–273 (DTAG) contribute to the GTP site. Serine 230 is a binding site for Mg(2+). Residues threonine 245, valine 247, and threonine 250 each coordinate K(+). Position 251 (threonine 251) interacts with Mg(2+). Lysine 446 lines the (6S)-5-formyl-5,6,7,8-tetrahydrofolate pocket.

The protein belongs to the TRAFAC class TrmE-Era-EngA-EngB-Septin-like GTPase superfamily. TrmE GTPase family. As to quaternary structure, homodimer. Heterotetramer of two MnmE and two MnmG subunits. K(+) serves as cofactor.

It localises to the cytoplasm. In terms of biological role, exhibits a very high intrinsic GTPase hydrolysis rate. Involved in the addition of a carboxymethylaminomethyl (cmnm) group at the wobble position (U34) of certain tRNAs, forming tRNA-cmnm(5)s(2)U34. The chain is tRNA modification GTPase MnmE from Xanthomonas oryzae pv. oryzae (strain PXO99A).